Here is a 194-residue protein sequence, read N- to C-terminus: Orotate phosphoribosyltransferase (194 aa).

Position 117–125 (117–125) interacts with 5-phospho-alpha-D-ribose 1-diphosphate; sequence EDIVSTGLS. Residues serine 121 and arginine 149 each coordinate orotate.

The protein belongs to the purine/pyrimidine phosphoribosyltransferase family. PyrE subfamily. Homodimer. The cofactor is Mg(2+).

It carries out the reaction orotidine 5'-phosphate + diphosphate = orotate + 5-phospho-alpha-D-ribose 1-diphosphate. It functions in the pathway pyrimidine metabolism; UMP biosynthesis via de novo pathway; UMP from orotate: step 1/2. Functionally, catalyzes the transfer of a ribosyl phosphate group from 5-phosphoribose 1-diphosphate to orotate, leading to the formation of orotidine monophosphate (OMP). This is Orotate phosphoribosyltransferase from Maricaulis maris (strain MCS10) (Caulobacter maris).